Here is a 205-residue protein sequence, read N- to C-terminus: Thymidylate kinase (205 aa).

11 to 18 (GVEGSGKS) lines the ATP pocket.

Belongs to the thymidylate kinase family.

The catalysed reaction is dTMP + ATP = dTDP + ADP. In terms of biological role, phosphorylation of dTMP to form dTDP in both de novo and salvage pathways of dTTP synthesis. The sequence is that of Thymidylate kinase from Ruthia magnifica subsp. Calyptogena magnifica.